We begin with the raw amino-acid sequence, 54 residues long: Preprotein translocase subunit SecG (54 aa).

Over 1-30 the chain is Cytoplasmic; sequence MSKNKQDAGLSTSAGLVRYMDEDASKIKIA. A helical transmembrane segment spans residues 31-52; it reads PEKVLGITISIMVLLFILNYGL. Over 53–54 the chain is Extracellular; it reads LA.

It belongs to the SEC61-beta family. In terms of assembly, component of the protein translocase complex. Heterotrimer consisting of alpha (SecY), beta (SecG) and gamma (SecE) subunits. Can form oligomers of the heterotrimer.

The protein localises to the cell membrane. Functionally, involved in protein export. The function of the beta subunit is unknown, but it may be involved in stabilization of the trimeric complex. This Methanococcus aeolicus (strain ATCC BAA-1280 / DSM 17508 / OCM 812 / Nankai-3) protein is Preprotein translocase subunit SecG.